A 124-amino-acid polypeptide reads, in one-letter code: BLOC-1-related complex subunit 8 (124 aa).

A disordered region spans residues 102 to 124; it reads SSSQGRSAVINPNETPAHTSVTP.

It belongs to the BORCS8 family.

It is found in the lysosome membrane. As part of a BORC-like complex, it may play a role in the movement and localization of lysosomes at the cell periphery. Associated with the cytosolic face of lysosomes, this complex may couple lysosomes to microtubule plus-end-directed kinesin motors, driving lysosome movement toward the cell periphery. This chain is BLOC-1-related complex subunit 8, found in Danio rerio (Zebrafish).